Here is a 190-residue protein sequence, read N- to C-terminus: Ribosome maturation factor RimM (190 aa).

Residues 95–171 (DPDEFYDHEL…VVMIEPPEGL (77 aa)) form the PRC barrel domain. The interval 169–190 (EGLLDPDFGDKSNSDNSNSDND) is disordered.

Belongs to the RimM family. In terms of assembly, binds ribosomal protein uS19.

It localises to the cytoplasm. Its function is as follows. An accessory protein needed during the final step in the assembly of 30S ribosomal subunit, possibly for assembly of the head region. Essential for efficient processing of 16S rRNA. May be needed both before and after RbfA during the maturation of 16S rRNA. It has affinity for free ribosomal 30S subunits but not for 70S ribosomes. This Rhodococcus erythropolis (strain PR4 / NBRC 100887) protein is Ribosome maturation factor RimM.